Reading from the N-terminus, the 114-residue chain is MNLILLLVIGFLVFIGTYMILSINLIRIVIGISIYTHAGNLIIMSMGKYGPHMSEPLIQGHAQNFVDPLLQAIVLTAIVIGFGMTAFLLVLIYRTYRVTKEDEISALKGDEDDE.

3 helical membrane-spanning segments follow: residues 3-23, 25-45, and 72-92; these read LILL…ILSI, LIRI…IIMS, and AIVL…LVLI.

Belongs to the CPA3 antiporters (TC 2.A.63) subunit C family. In terms of assembly, may form a heterooligomeric complex that consists of seven subunits: mnhA2, mnhB2, mnhC2, mnhD2, mnhE2, mnhF2 and mnhG2.

The protein resides in the cell membrane. This chain is Putative antiporter subunit mnhC2 (mnhC2), found in Staphylococcus epidermidis (strain ATCC 12228 / FDA PCI 1200).